A 181-amino-acid polypeptide reads, in one-letter code: HGPRTase-like protein 2 (181 aa).

It belongs to the purine/pyrimidine phosphoribosyltransferase family. Archaeal HPRT subfamily.

Functionally, may catalyze a purine salvage reaction, the substrate is unknown. The sequence is that of HGPRTase-like protein 2 from Haloterrigena turkmenica (strain ATCC 51198 / DSM 5511 / JCM 9101 / NCIMB 13204 / VKM B-1734 / 4k) (Halococcus turkmenicus).